The primary structure comprises 273 residues: 2,3,4,5-tetrahydropyridine-2,6-dicarboxylate N-succinyltransferase (273 aa).

Substrate is bound by residues Arg-104 and Asp-141.

It belongs to the transferase hexapeptide repeat family. As to quaternary structure, homotrimer.

The protein localises to the cytoplasm. It carries out the reaction (S)-2,3,4,5-tetrahydrodipicolinate + succinyl-CoA + H2O = (S)-2-succinylamino-6-oxoheptanedioate + CoA. The protein operates within amino-acid biosynthesis; L-lysine biosynthesis via DAP pathway; LL-2,6-diaminopimelate from (S)-tetrahydrodipicolinate (succinylase route): step 1/3. The polypeptide is 2,3,4,5-tetrahydropyridine-2,6-dicarboxylate N-succinyltransferase (Nitrosomonas europaea (strain ATCC 19718 / CIP 103999 / KCTC 2705 / NBRC 14298)).